We begin with the raw amino-acid sequence, 293 residues long: NAD kinase (293 aa).

Asp72 (proton acceptor) is an active-site residue. Residues 72 to 73 (DG), 146 to 147 (ND), Arg157, Arg174, Asp176, 187 to 192 (TAYALS), and Gln247 each bind NAD(+).

This sequence belongs to the NAD kinase family. It depends on a divalent metal cation as a cofactor.

It is found in the cytoplasm. It catalyses the reaction NAD(+) + ATP = ADP + NADP(+) + H(+). Its function is as follows. Involved in the regulation of the intracellular balance of NAD and NADP, and is a key enzyme in the biosynthesis of NADP. Catalyzes specifically the phosphorylation on 2'-hydroxyl of the adenosine moiety of NAD to yield NADP. The sequence is that of NAD kinase from Teredinibacter turnerae (strain ATCC 39867 / T7901).